A 390-amino-acid polypeptide reads, in one-letter code: Leu/Ile/Val-binding protein homolog 6 (390 aa).

A signal peptide spans 1–21; it reads MKKIALTALAVFSLAASAAYA.

The protein belongs to the leucine-binding protein family.

In terms of biological role, component of an amino-acid transport system. The polypeptide is Leu/Ile/Val-binding protein homolog 6 (Brucella suis biovar 1 (strain 1330)).